Here is a 316-residue protein sequence, read N- to C-terminus: Low affinity immunoglobulin gamma Fc region receptor II-a (316 aa).

Positions 1-35 are cleaved as a signal peptide; sequence MAMETQMSQNVCPRNLWLLQPLTVLLLLASADSQA. Residues 36-216 lie on the Extracellular side of the membrane; the sequence is APPKAVLKLE…PSVGSSSPVG (181 aa). Ig-like C2-type domains follow at residues 38–117 and 121–203; these read PKAV…VHLT and EWLV…VTIT. 2 disulfides stabilise this stretch: Cys-61–Cys-103 and Cys-142–Cys-186. Asn-96, Asn-170, and Asn-177 each carry an N-linked (GlcNAc...) asparagine glycan. The chain crosses the membrane as a helical span at residues 217–239; it reads IIVAVVIATAVAAIVAAVVALIY. At 240–316 the chain is on the cytoplasmic side; it reads CRKKRISANS…PPNDHVNSNN (77 aa). A phosphotyrosine; by SRC-type Tyr-kinases mark is found at Tyr-287 and Tyr-303.

Interacts with INPP5D/SHIP1 and INPPL1/SHIP2, regulating its function. Interacts with APCS and FGR. Interacts with HCK. Phosphorylated by SRC-type Tyr-kinases such as HCK, LYN, BLK, FYN and SYK.

The protein localises to the cell membrane. In terms of biological role, binds to the Fc region of immunoglobulins gamma. Low affinity receptor. By binding to IgG it initiates cellular responses against pathogens and soluble antigens. Promotes phagocytosis of opsonized antigens. The polypeptide is Low affinity immunoglobulin gamma Fc region receptor II-a (FCGR2A) (Pan troglodytes (Chimpanzee)).